A 165-amino-acid polypeptide reads, in one-letter code: Transcription antitermination protein NusB (165 aa).

The disordered stretch occupies residues 1 to 20 (MSDVENGGEPRQPSVKPANQ).

The protein belongs to the NusB family.

Involved in transcription antitermination. Required for transcription of ribosomal RNA (rRNA) genes. Binds specifically to the boxA antiterminator sequence of the ribosomal RNA (rrn) operons. This is Transcription antitermination protein NusB from Agrobacterium fabrum (strain C58 / ATCC 33970) (Agrobacterium tumefaciens (strain C58)).